The following is a 234-amino-acid chain: Transcription factor ILR3 (234 aa).

The interval 34 to 85 (QPIGVSSNSSAGVDGSAGNSEASKEPGSKKRGRCESSSATSSKACREKQRRD) is disordered. Positions 36-54 (IGVSSNSSAGVDGSAGNSE) are enriched in polar residues. Residues 71-122 (SATSSKACREKQRRDRLNDKFMELGAILEPGNPPKTDKAAILVDAVRMVTQL) form the bHLH domain.

As to quaternary structure, homodimer. Interacts with BTS and BHLH47/PYE. As to expression, widely expressed throughout development, mostly in vasculatures.

The protein resides in the nucleus. Its function is as follows. Transcription factor. Plays a role in resistance to amide-linked indole-3-acetic acid (IAA) conjugates such as IAA-Leu and IAA-Phe. May regulate gene expression in response to metal homeostasis changes. The chain is Transcription factor ILR3 (ILR3) from Arabidopsis thaliana (Mouse-ear cress).